A 438-amino-acid chain; its full sequence is Aflatoxin cluster transcriptional coactivator aflS (438 aa).

An HTH iclR-type domain is found at 65–134; that stretch reads LALYNQLLAC…PSPGHVAHSV (70 aa). A DNA-binding region (H-T-H motif) is located at residues 95–114; sequence FEDVADIAGVPECRLRRLVR.

In terms of assembly, interacts with aflR.

The protein localises to the nucleus. It is found in the endosome. Functionally, transcription coactivator involved in regulation of the aflatoxin biosynthesis gene cluster with aflR. The ratio of the expression data between aflS:aflR plays a crucial role in the regulation of aflatoxins production. A high ratio, produced at a range between 17 and 30 degrees Celsius, corresponds with the production profile of aflatoxin G1 biosynthesis. A low ratio, produced over 30 degrees Celsius, is related to aflatoxin B1 biosynthesis. AflJ may act in aflR transport to or from the nucleus, thus controlling the availability of aflR for transcriptional activation of aflatoxin biosynthesis cluster genes. AflJ may also assist in directing endosomes to the cytoplasmic membrane for aflatoxin export. The chain is Aflatoxin cluster transcriptional coactivator aflS from Aspergillus parasiticus (strain ATCC 56775 / NRRL 5862 / SRRC 143 / SU-1).